Here is a 559-residue protein sequence, read N- to C-terminus: Asparagine--tRNA ligase, cytoplasmic (559 aa).

Phosphoserine is present on serine 72. The segment at 82–102 is disordered; it reads HREQMKNDSREKKEAEDNLRR. Residue lysine 255 is modified to N6-acetyllysine. Residue serine 493 is modified to Phosphoserine. Residue lysine 501 is modified to N6-acetyllysine.

It belongs to the class-II aminoacyl-tRNA synthetase family. In terms of assembly, homodimer.

The protein localises to the cytoplasm. The catalysed reaction is tRNA(Asn) + L-asparagine + ATP = L-asparaginyl-tRNA(Asn) + AMP + diphosphate + H(+). Functionally, catalyzes the attachment of asparagine to tRNA(Asn) in a two-step reaction: asparagine is first activated by ATP to form Asn-AMP and then transferred to the acceptor end of tRNA(Asn). In addition to its essential role in protein synthesis, acts as a signaling molecule that induced migration of CCR3-expressing cells. Has an essential role in the development of the cerebral cortex, being required for proper proliferation of radial glial cells. This Mus musculus (Mouse) protein is Asparagine--tRNA ligase, cytoplasmic.